Here is a 372-residue protein sequence, read N- to C-terminus: Ligninase H2 (372 aa).

Residues 1-21 (MAFKQLLAALSVALTLQVTQA) form the signal peptide. Residues 22-28 (APNLDKR) constitute a propeptide that is removed on maturation. 4 disulfide bridges follow: cysteine 31-cysteine 44, cysteine 43-cysteine 314, cysteine 63-cysteine 149, and cysteine 278-cysteine 344. Catalysis depends on histidine 76, which acts as the Proton acceptor. 4 residues coordinate Ca(2+): aspartate 77, glycine 95, aspartate 97, and serine 99. Heme b is bound at residue histidine 205. Serine 206, aspartate 223, threonine 225, glutamine 228, and aspartate 230 together coordinate Ca(2+). A glycan (N-linked (GlcNAc...) asparagine) is linked at asparagine 286.

Belongs to the peroxidase family. Ligninase subfamily. Requires heme b as cofactor. Ca(2+) serves as cofactor.

The enzyme catalyses 1-(3,4-dimethoxyphenyl)-2-(2-methoxyphenoxy)propane-1,3-diol + H2O2 = 3,4-dimethoxybenzaldehyde + guaiacol + glycolaldehyde + H2O. It catalyses the reaction 2 (3,4-dimethoxyphenyl)methanol + H2O2 = 2 (3,4-dimethoxyphenyl)methanol radical + 2 H2O. It functions in the pathway secondary metabolite metabolism; lignin degradation. Depolymerization of lignin. Catalyzes the C(alpha)-C(beta) cleavage of the propyl side chains of lignin. The chain is Ligninase H2 (GLG4) from Phanerodontia chrysosporium (White-rot fungus).